A 283-amino-acid polypeptide reads, in one-letter code: N-terminal Xaa-Pro-Lys N-methyltransferase 2 (283 aa).

Residues G124, R129, D146, L174 to Q175, Q190, and H195 contribute to the S-adenosyl-L-methionine site.

It belongs to the methyltransferase superfamily. NTM1 family.

It is found in the nucleus. The catalysed reaction is N-terminal L-alanyl-L-prolyl-L-lysyl-[protein] + S-adenosyl-L-methionine = N-terminal N-methyl-L-alanyl-L-prolyl-L-lysyl-[protein] + S-adenosyl-L-homocysteine + H(+). It carries out the reaction N-terminal L-prolyl-L-prolyl-L-lysyl-[protein] + S-adenosyl-L-methionine = N-terminal N-methyl-L-prolyl-L-prolyl-L-lysyl-[protein] + S-adenosyl-L-homocysteine + H(+). The enzyme catalyses N-terminal L-seryl-L-prolyl-L-lysyl-[protein] + S-adenosyl-L-methionine = N-terminal N-methyl-L-seryl-L-prolyl-L-lysyl-[protein] + S-adenosyl-L-homocysteine + H(+). Alpha N-methyltransferase that methylates the N-terminus of target proteins containing the N-terminal motif [Ala/Pro/Ser]-Pro-Lys when the initiator Met is cleaved. Specifically catalyzes monomethylation of exposed alpha-amino group of Ala or Ser residue in the [Ala/Ser]-Pro-Lys motif and Pro in the Pro-Pro-Lys motif. Predominantly functions as a mono-methyltransferase but is also able to di-/tri-methylate the GPKRIA peptide and di-methylate the PPKRIA peptide (in vitro). May activate NTMT1 by priming its substrates for trimethylation. This chain is N-terminal Xaa-Pro-Lys N-methyltransferase 2, found in Homo sapiens (Human).